A 247-amino-acid polypeptide reads, in one-letter code: Probable 2-phosphosulfolactate phosphatase (247 aa).

It belongs to the ComB family. It depends on Mg(2+) as a cofactor.

The enzyme catalyses (2R)-O-phospho-3-sulfolactate + H2O = (2R)-3-sulfolactate + phosphate. This is Probable 2-phosphosulfolactate phosphatase from Clostridium perfringens (strain 13 / Type A).